The sequence spans 623 residues: Chaperone protein DnaK (623 aa).

Threonine 175 carries the post-translational modification Phosphothreonine; by autocatalysis. The interval 580–623 is disordered; it reads PEGAQGAGFDPNNMGGANAGNASAGNDKKDDNVVDADFKVEDDK. Low complexity predominate over residues 591 to 604; it reads NNMGGANAGNASAG. The segment covering 605–623 has biased composition (basic and acidic residues); sequence NDKKDDNVVDADFKVEDDK.

Belongs to the heat shock protein 70 family.

Functionally, acts as a chaperone. This is Chaperone protein DnaK from Clostridium botulinum (strain Hall / ATCC 3502 / NCTC 13319 / Type A).